Reading from the N-terminus, the 99-residue chain is Large ribosomal subunit protein bL21 (99 aa).

This sequence belongs to the bacterial ribosomal protein bL21 family. In terms of assembly, part of the 50S ribosomal subunit. Contacts protein L20.

Its function is as follows. This protein binds to 23S rRNA in the presence of protein L20. This chain is Large ribosomal subunit protein bL21, found in Mycoplasmopsis agalactiae (strain NCTC 10123 / CIP 59.7 / PG2) (Mycoplasma agalactiae).